A 264-amino-acid polypeptide reads, in one-letter code: Apolipoprotein A-I (264 aa).

The signal sequence occupies residues Met-1–Ala-18. 2 repeat units span residues Leu-67 to Gly-88 and Leu-89 to Ser-110. A 10 X approximate tandem repeats region spans residues Leu-67–Gln-264. Residues Glu-111 to Gln-121 form a 3; half-length repeat. A run of 5 repeats spans residues Pro-122–Arg-143, Pro-144–Thr-165, Pro-166–Ala-187, Pro-188–Ser-207, and Ala-208–Lys-229. Methionine sulfoxide is present on Met-193. A 9; half-length repeat occupies Pro-230 to Leu-240. The stretch at Pro-241–Gln-264 is repeat 10.

It belongs to the apolipoprotein A1/A4/E family. As to quaternary structure, homodimer. Interacts with APOA1BP and CLU. Component of a sperm activating protein complex (SPAP), consisting of APOA1, an immunoglobulin heavy chain, an immunoglobulin light chain and albumin. Interacts with NDRG1. Interacts with SCGB3A2. Interacts with NAXE and YJEFN3. Glycosylated. In terms of processing, palmitoylated. Post-translationally, phosphorylation sites are present in the extracellular medium.

The protein localises to the secreted. In terms of biological role, participates in the reverse transport of cholesterol from tissues to the liver for excretion by promoting cholesterol efflux from tissues and by acting as a cofactor for the lecithin cholesterol acyltransferase (LCAT). As part of the SPAP complex, activates spermatozoa motility. This Cavia porcellus (Guinea pig) protein is Apolipoprotein A-I (APOA1).